We begin with the raw amino-acid sequence, 353 residues long: Photosystem II D2 protein (353 aa).

Thr2 is subject to N-acetylthreonine. A Phosphothreonine modification is found at Thr2. Residues 41-61 (CAYFALGGWFTGTTFVTSWYT) form a helical membrane-spanning segment. His118 is a chlorophyll a binding site. Residues 125–141 (GFMLRQFELARSVQLRP) form a helical membrane-spanning segment. Pheophytin a-binding residues include Gln130 and Asn143. Residues 153–166 (VFVSVFLIYPLGQS) form a helical membrane-spanning segment. His198 is a binding site for chlorophyll a. The chain crosses the membrane as a helical span at residues 208 to 228 (AALLCAIHGATVENTLFEDGD). A plastoquinone-binding residues include His215 and Phe262. His215 lines the Fe cation pocket. His269 serves as a coordination point for Fe cation. The helical transmembrane segment at 279–295 (GLWMSALGVVGLALNLR) threads the bilayer.

Belongs to the reaction center PufL/M/PsbA/D family. As to quaternary structure, PSII is composed of 1 copy each of membrane proteins PsbA, PsbB, PsbC, PsbD, PsbE, PsbF, PsbH, PsbI, PsbJ, PsbK, PsbL, PsbM, PsbT, PsbX, PsbY, PsbZ, Psb30/Ycf12, at least 3 peripheral proteins of the oxygen-evolving complex and a large number of cofactors. It forms dimeric complexes. Requires The D1/D2 heterodimer binds P680, chlorophylls that are the primary electron donor of PSII, and subsequent electron acceptors. It shares a non-heme iron and each subunit binds pheophytin, quinone, additional chlorophylls, carotenoids and lipids. There is also a Cl(-1) ion associated with D1 and D2, which is required for oxygen evolution. The PSII complex binds additional chlorophylls, carotenoids and specific lipids. as cofactor.

It is found in the plastid. Its subcellular location is the chloroplast thylakoid membrane. It catalyses the reaction 2 a plastoquinone + 4 hnu + 2 H2O = 2 a plastoquinol + O2. Functionally, photosystem II (PSII) is a light-driven water:plastoquinone oxidoreductase that uses light energy to abstract electrons from H(2)O, generating O(2) and a proton gradient subsequently used for ATP formation. It consists of a core antenna complex that captures photons, and an electron transfer chain that converts photonic excitation into a charge separation. The D1/D2 (PsbA/PsbD) reaction center heterodimer binds P680, the primary electron donor of PSII as well as several subsequent electron acceptors. D2 is needed for assembly of a stable PSII complex. This Chloranthus spicatus (Chulantree) protein is Photosystem II D2 protein.